Consider the following 268-residue polypeptide: Tryptophan synthase alpha chain (268 aa).

Residues E49 and D60 each act as proton acceptor in the active site.

Belongs to the TrpA family. In terms of assembly, tetramer of two alpha and two beta chains.

It carries out the reaction (1S,2R)-1-C-(indol-3-yl)glycerol 3-phosphate + L-serine = D-glyceraldehyde 3-phosphate + L-tryptophan + H2O. Its pathway is amino-acid biosynthesis; L-tryptophan biosynthesis; L-tryptophan from chorismate: step 5/5. In terms of biological role, the alpha subunit is responsible for the aldol cleavage of indoleglycerol phosphate to indole and glyceraldehyde 3-phosphate. This Escherichia coli O81 (strain ED1a) protein is Tryptophan synthase alpha chain.